The following is a 241-amino-acid chain: Phosphoadenosine 5'-phosphosulfate reductase (241 aa).

C235 serves as the catalytic Nucleophile; cysteine thiosulfonate intermediate.

It belongs to the PAPS reductase family. CysH subfamily.

It localises to the cytoplasm. It carries out the reaction [thioredoxin]-disulfide + sulfite + adenosine 3',5'-bisphosphate + 2 H(+) = [thioredoxin]-dithiol + 3'-phosphoadenylyl sulfate. It participates in sulfur metabolism; hydrogen sulfide biosynthesis; sulfite from sulfate: step 3/3. Its function is as follows. Catalyzes the formation of sulfite from phosphoadenosine 5'-phosphosulfate (PAPS) using thioredoxin as an electron donor. The sequence is that of Phosphoadenosine 5'-phosphosulfate reductase from Xanthomonas axonopodis pv. citri (strain 306).